A 652-amino-acid polypeptide reads, in one-letter code: Gametogenetin (652 aa).

Disordered stretches follow at residues 1-39, 52-237, 251-273, 291-473, and 488-576; these read MGNL…MTSQ, PGSA…DSES, PSLA…GGGG, QGPL…GHKE, and LAAD…GAAN. 2 stretches are compositionally biased toward basic and acidic residues: residues 18–30 and 124–133; these read QPSD…RRTS and RLLEASHRGQ. The segment at 123-486 is interaction with GGNBP1; that stretch reads RRLLEASHRG…APTAAPALPP (364 aa). Pro residues-rich tracts occupy residues 138 to 149 and 163 to 178; these read SLRPLKPPPPPR and QFPP…PPLP. Polar residues predominate over residues 201 to 212; the sequence is ESQAGPRNQGQT. Low complexity-rich tracts occupy residues 213 to 230, 251 to 267, and 299 to 312; these read AGRA…GEMA, PSLA…AKAS, and ARPL…AQEA. A Phosphoserine modification is found at Ser-389. Residues 407–422 show a composition bias toward low complexity; it reads APALLAPPTFIFPAPT. 2 stretches are compositionally biased toward pro residues: residues 428-466 and 495-513; these read RPGP…PPLT and APSP…PVSA. Residues 491-652 form an interactions with ZNF403/GGNBP2 and OAZ3 region; the sequence is DQAPAPSPAP…HYDLQATHSN (162 aa). Positions 523 to 532 are enriched in basic residues; it reads TRTRRNKGSR. The segment covering 538 to 552 has biased composition (basic and acidic residues); it reads TRKDGLHGDGPRERA.

In terms of assembly, interacts with FANCL, GGNBP1 and ZNF403/GGNBP2.

Functionally, may be involved in spermatogenesis. This chain is Gametogenetin (GGN), found in Homo sapiens (Human).